A 243-amino-acid chain; its full sequence is Complement C1q tumor necrosis factor-related protein 5 (243 aa).

The N-terminal stretch at 1–15 (MRPLLALLLLGLASG) is a signal peptide. A disordered region spans residues 15-124 (GSPPLDDNKI…VPPPADTPLP (110 aa)). The Collagen-like domain maps to 30 to 95 (GQPGLPGTPG…AGPVGAIGPA (66 aa)). Positions 99 to 238 (SVPPRSAFSA…GFLVYSDWHS (140 aa)) constitute a C1q domain.

Homotrimer (via collagen-like domain). May form higher order oligomers by supercoiling of the trimers. May interact with ERFE.

It localises to the secreted. This is Complement C1q tumor necrosis factor-related protein 5 (C1qtnf5) from Rattus norvegicus (Rat).